The chain runs to 97 residues: Ice-structuring protein (97 aa).

The signal sequence occupies residues 1 to 23; sequence MALSLFTVGQLIFLFWTLRITEA. The propeptide at 24-48 is removed by a dipeptidylpeptidase; sequence NPDPAAKAAPAAVADPAAAAAAAVA.

Belongs to the type-I AFP family. Detected in blood serum (at protein level).

It localises to the secreted. Its function is as follows. Contributes to protect fish blood from freezing at subzero sea water temperatures. Lowers the blood freezing point. Binds to nascent ice crystals and prevents further growth. This is Ice-structuring protein from Myzopsetta ferruginea (Yellowtail flounder).